Here is a 310-residue protein sequence, read N- to C-terminus: tRNA dimethylallyltransferase (310 aa).

Position 14 to 21 (14 to 21 (GPTASGKS)) interacts with ATP. Position 16–21 (16–21 (TASGKS)) interacts with substrate. 2 interaction with substrate tRNA regions span residues 39–42 (DSMQ) and 163–167 (QRIVR).

It belongs to the IPP transferase family. In terms of assembly, monomer. Requires Mg(2+) as cofactor.

It catalyses the reaction adenosine(37) in tRNA + dimethylallyl diphosphate = N(6)-dimethylallyladenosine(37) in tRNA + diphosphate. In terms of biological role, catalyzes the transfer of a dimethylallyl group onto the adenine at position 37 in tRNAs that read codons beginning with uridine, leading to the formation of N6-(dimethylallyl)adenosine (i(6)A). The protein is tRNA dimethylallyltransferase of Brucella ovis (strain ATCC 25840 / 63/290 / NCTC 10512).